Here is a 422-residue protein sequence, read N- to C-terminus: Adenylosuccinate synthetase (422 aa).

Residues 11 to 17 (GDEGKGK) and 39 to 41 (GHT) contribute to the GTP site. Asp-12 acts as the Proton acceptor in catalysis. Mg(2+)-binding residues include Asp-12 and Gly-39. IMP contacts are provided by residues 12–15 (DEGK), 37–40 (NAGH), Thr-129, Arg-143, Asn-219, Thr-234, and Arg-298. His-40 acts as the Proton donor in catalysis. 294-300 (VTTGRKR) serves as a coordination point for substrate. GTP-binding positions include Arg-300, 326–328 (KLD), and 411–413 (GTG).

The protein belongs to the adenylosuccinate synthetase family. As to quaternary structure, homodimer. Requires Mg(2+) as cofactor.

The protein resides in the cytoplasm. The catalysed reaction is IMP + L-aspartate + GTP = N(6)-(1,2-dicarboxyethyl)-AMP + GDP + phosphate + 2 H(+). It participates in purine metabolism; AMP biosynthesis via de novo pathway; AMP from IMP: step 1/2. In terms of biological role, plays an important role in the de novo pathway and in the salvage pathway of purine nucleotide biosynthesis. Catalyzes the first committed step in the biosynthesis of AMP from IMP. The sequence is that of Adenylosuccinate synthetase from Talaromyces marneffei (strain ATCC 18224 / CBS 334.59 / QM 7333) (Penicillium marneffei).